The primary structure comprises 254 residues: Alcohol dehydrogenase (254 aa).

Residue 10-33 (FVAGLGGIGLDTSREIVKSGPKNL) coordinates NAD(+). Ser138 lines the substrate pocket. Tyr151 acts as the Proton acceptor in catalysis.

This sequence belongs to the short-chain dehydrogenases/reductases (SDR) family. Homodimer.

The enzyme catalyses a primary alcohol + NAD(+) = an aldehyde + NADH + H(+). The catalysed reaction is a secondary alcohol + NAD(+) = a ketone + NADH + H(+). In Drosophila planitibia (Fruit fly), this protein is Alcohol dehydrogenase (Adh).